Consider the following 335-residue polypeptide: ATP-dependent 6-phosphofructokinase (335 aa).

An ATP-binding site is contributed by G11. 21 to 25 is an ADP binding site; it reads RAVVR. Residues 72–73 and 102–105 each bind ATP; these read RY and GDGS. Position 103 (D103) interacts with Mg(2+). 125–127 is a binding site for substrate; the sequence is TID. D127 serves as the catalytic Proton acceptor. Residue R154 coordinates ADP. Residues R162 and 169–171 each bind substrate; that span reads MGR. ADP is bound by residues 185 to 187 and 213 to 215; these read GAD and KKH. Substrate is bound by residues E222, R244, and 250 to 253; that span reads HIQR.

This sequence belongs to the phosphofructokinase type A (PFKA) family. ATP-dependent PFK group I subfamily. Prokaryotic clade 'B1' sub-subfamily. In terms of assembly, homotetramer. Mg(2+) is required as a cofactor.

Its subcellular location is the cytoplasm. It catalyses the reaction beta-D-fructose 6-phosphate + ATP = beta-D-fructose 1,6-bisphosphate + ADP + H(+). It functions in the pathway carbohydrate degradation; glycolysis; D-glyceraldehyde 3-phosphate and glycerone phosphate from D-glucose: step 3/4. Its activity is regulated as follows. Allosterically activated by ADP and other diphosphonucleosides, and allosterically inhibited by phosphoenolpyruvate. Catalyzes the phosphorylation of D-fructose 6-phosphate to fructose 1,6-bisphosphate by ATP, the first committing step of glycolysis. This Streptococcus pneumoniae (strain CGSP14) protein is ATP-dependent 6-phosphofructokinase.